Reading from the N-terminus, the 278-residue chain is MWSLWSLLLFEALLPVVVVSVQVLSKVGDSELLVAECPPGFQVREAIWRSLWPSEELLATFFRGSLETLYHSRFLGRVQLYDNLSLELGPLKPGDSGNFSVLMVDTGGQTWTQTLYLKVYDAVPKPEVQVFTAAAEETQPLNTCQVFLSCWAPNISDITYSWRWEGTVDFNGEVRSHFSNGQVLSVSLGLGDKDVAFTCIASNPVSWDMTTVTPWESCHHEAASGKASYKDVLLVVVPITLFLILAGLFGAWHHGLCSGKKKDACTDGVLPETENALV.

Positions 1 to 20 (MWSLWSLLLFEALLPVVVVS) are cleaved as a signal peptide. Residues 21–231 (VQVLSKVGDS…AASGKASYKD (211 aa)) lie on the Extracellular side of the membrane. N-linked (GlcNAc...) asparagine glycosylation is found at Asn-83 and Asn-154. The Ig-like C2-type domain occupies 126 to 213 (PEVQVFTAAA…PVSWDMTTVT (88 aa)). Cysteines 150 and 199 form a disulfide. A helical membrane pass occupies residues 232–252 (VLLVVVPITLFLILAGLFGAW). The Cytoplasmic portion of the chain corresponds to 253 to 278 (HHGLCSGKKKDACTDGVLPETENALV).

The protein localises to the membrane. May play a role in B-lineage commitment and/or modulation of signaling through the B-cell receptor. The chain is SLAM family member 8 (Slamf8) from Mus musculus (Mouse).